The primary structure comprises 291 residues: 29 kDa ribonucleoprotein B, chloroplastic (291 aa).

Residues 87–165 (LKLFVGNLPF…RAIRVNAGPA (79 aa)) enclose the RRM 1 domain. The segment at 164–202 (PAPAKRENSSFGGGRGGNSSYGGGRDGNSSFGGARGGRS) is disordered. Positions 166–206 (PAKRENSSFGGGRGGNSSYGGGRDGNSSFGGARGGRSVDSS) are linker (Gly-rich). Residues 174–189 (FGGGRGGNSSYGGGRD) show a composition bias toward gly residues. The region spanning 207 to 285 (NRVYVGNLSW…RSIRVSAAEE (79 aa)) is the RRM 2 domain.

The protein localises to the plastid. The protein resides in the chloroplast. In terms of biological role, could be involved in splicing and/or processing of chloroplast RNA's. The sequence is that of 29 kDa ribonucleoprotein B, chloroplastic from Nicotiana sylvestris (Wood tobacco).